The following is a 751-amino-acid chain: Amyloid-beta precursor protein (751 aa).

Positions 1-17 are cleaved as a signal peptide; sequence MLPGLALLLLAAWTARA. Topologically, residues 18–682 are extracellular; that stretch reads LEVPTDGNAG…AEDVGSNKGA (665 aa). Residues 28 to 123 are GFLD subdomain; the sequence is LLAEPQIAMF…PYRCLVGEFV (96 aa). The E1 domain occupies 28–189; the sequence is LLAEPQIAMF…RGVEFVCCPL (162 aa). Cystine bridges form between C38-C62, C73-C117, C98-C105, C133-C187, C144-C174, and C158-C186. Heparin is bound at residue 96-110; the sequence is NWCKRDRKQCKTHPH. The cuBD subdomain stretch occupies residues 131–189; it reads DKCKFLHQERMDVCETHLHWHTVAKETCSEKSTNLHDYGMLLPCGIDKFRGVEFVCCPL. The Cu(2+) site is built by H147, H151, and Y168. The interval 181–188 is zinc-binding; the sequence is GVEFVCCP. Positions 183, 186, and 187 each coordinate Zn(2+). The interval 195–284 is disordered; that stretch reads HVDSADAEED…TTTTTTESVE (90 aa). Residues S198 and S206 each carry the phosphoserine; by CK1 and CK2 modification. Residues Y217 and Y262 each carry the sulfotyrosine modification. A compositionally biased stretch (acidic residues) spans 228–264; sequence VAEEEEVAEVEEEEADDDEDDEDGDEVEEEAEEPYEE. The span at 268-281 shows a compositional bias: low complexity; that stretch reads RTTSIATTTTTTTE. 3 disulfides stabilise this stretch: C291/C341, C300/C324, and C316/C337. Residues 291–341 enclose the BPTI/Kunitz inhibitor domain; sequence CSEQAETGPCRAMISRWYFDVTEGKCAPFFYGGCGGNRNNFDTEEYCMAVC. 2 heparin-binding regions span residues 316–344 and 363–428; these read CAPF…CGSV and PGDE…QEAA. Y336 bears the Sulfotyrosine mark. Positions 344-346 match the OX-2 motif; the sequence is VIP. The E2 domain maps to 355-546; that stretch reads AVDKYLETPG…EEIQDEVDEL (192 aa). Position 422 is a phosphoserine (S422). Phosphotyrosine is present on Y478. The segment at 504 to 521 is collagen-binding; sequence AAQIRSQVMTHLRVIYER. N-linked (GlcNAc...) asparagine glycosylation is found at N523 and N552. Cu(2+)-binding residues include H658, Y662, H665, and H666. Positions 658, 662, 665, and 666 each coordinate Zn(2+). The segment at 676 to 703 is interaction with PSEN1; that stretch reads VGSNKGAIIGLMVGGVVIATVIVITLVM. A helical membrane pass occupies residues 683 to 703; the sequence is IIGLMVGGVVIATVIVITLVM. The Cytoplasmic portion of the chain corresponds to 704–751; that stretch reads LKKKQYTSIHHGVVEVDAAVTPEERHLSKMQQNGYENPTYKFFEQMQN. A Basolateral sorting signal motif is present at residues 705 to 715; the sequence is KKKQYTSIHHG. Phosphothreonine is present on T710. A Phosphoserine; by APP-kinase I modification is found at S711. The interaction with G(o)-alpha stretch occupies residues 713–732; it reads HHGVVEVDAAVTPEERHLSK. Residue T724 is modified to Phosphothreonine; by CDK5 and MAPK10. Residues 737 to 751 are required for the interaction with KIF5B and for anterograde transport in axons; it reads GYENPTYKFFEQMQN. The residue at position 738 (Y738) is a Phosphotyrosine; by ABL1. Residues 738-743 carry the YENPXY motif; contains endocytosis signal motif; it reads YENPTY. A Glycyl lysine isopeptide (Lys-Gly) (interchain with G-Cter in ubiquitin) cross-link involves residue K744.

The protein belongs to the APP family. In terms of assembly, binds, via its C-terminus, to the PID domain of several cytoplasmic proteins, including APBB family members, the APBA family, MAPK8IP1, SHC1 and NUMB and DAB1. Binding to DAB1 inhibits its serine phosphorylation. Interacts (via NPXY motif) with DAB2 (via PID domain); the interaction is impaired by tyrosine phosphorylation of the NPXY motif. Also interacts with GPCR-like protein BPP, APPBP1, IB1, KNS2 (via its TPR domains), APPBP2 (via BaSS) and DDB1. In vitro, it binds MAPT via the MT-binding domains. Associates with microtubules in the presence of ATP and in a kinesin-dependent manner. Interacts, through a C-terminal domain, with GNAO1. Amyloid-beta protein 42 binds CHRNA7 in hippocampal neurons. Amyloid-beta associates with HADH2. Interacts with CPEB1, ANKS1B and AGER. Interacts with ITM2B. Interacts with ITM2C. Interacts with IDE. Can form homodimers; dimerization is enhanced in the presence of Cu(2+) ions. Can form homodimers; this is promoted by heparin binding. Amyloid-beta protein 40 interacts with S100A9. CTF-alpha product of APP interacts with GSAP. Isoform APP695 interacts with SORL1 (via N-terminal ectodomain); this interaction retains APP in the trans-Golgi network and reduces processing into soluble APP-alpha and amyloid-beta peptides. Isoform APP770 interacts with SORL1. The C99 fragment also interacts with SORL1. Interacts with PLD3. Interacts with VDAC1. Interacts with NSG1; could regulate APP processing. Amyloid-beta protein 42 interacts with FPR2. Interacts (via transmembrane region) with PSEN1; the interaction is direct. Interacts with LRRK2. Interacts (via cytoplasmic domain) with KIF5B. Interacts (via C-terminus) with APBB2/FE65L1 (via C-terminus). Interacts (via intracellular domain) with APBB3. In terms of processing, proteolytically processed under normal cellular conditions. Cleavage either by alpha-secretase, beta-secretase or theta-secretase leads to generation and extracellular release of soluble APP peptides, S-APP-alpha and S-APP-beta, and the retention of corresponding membrane-anchored C-terminal fragments, C80, C83 and C99. Subsequent processing of C80 and C83 by gamma-secretase yields P3 peptides. This is the major secretory pathway and is non-amyloidogenic. Alternatively, presenilin/nicastrin-mediated gamma-secretase processing of C99 releases the amyloid-beta proteins, amyloid-beta protein 40 and amyloid-beta protein 42, major components of amyloid plaques, and the cytotoxic C-terminal fragments, gamma-CTF(50), gamma-CTF(57) and gamma-CTF(59). PSEN1 cleavage is more efficient with C83 than with C99 as substrate (in vitro). Amyloid-beta protein 40 and Amyloid-beta protein 42 are cleaved by ACE. Many other minor amyloid-beta peptides, amyloid-beta 1-X peptides, are found in cerebral spinal fluid (CSF) including the amyloid-beta X-15 peptides, produced from the cleavage by alpha-secretase. Post-translationally, proteolytically cleaved by caspases during neuronal apoptosis. Cleavage at Asp-720 by either caspase-3, -8 or -9 results in the production of the neurotoxic C31 peptide and the increased production of amyloid-beta peptides. N- and O-glycosylated. In terms of processing, phosphorylation in the C-terminal on tyrosine, threonine and serine residues is neuron-specific. Phosphorylation can affect APP processing, neuronal differentiation and interaction with other proteins. Phosphorylated on Thr-724 in neuronal cells by Cdc5 kinase and Mapk10, in dividing cells by Cdc2 kinase in a cell-cycle dependent manner with maximal levels at the G2/M phase and, in vitro, by GSK-3-beta. The Thr-724 phosphorylated form causes a conformational change which reduces binding of Fe65 family members. In dopaminergic (DA) neurons, phosphorylation on Thr-724 by LRKK2 promotes the production and the nuclear translocation of the APP intracellular domain (AICD) which induces DA neuron apoptosis. Phosphorylation on Tyr-738 is required for SHC binding. Phosphorylated in the extracellular domain by casein kinases on both soluble and membrane-bound APP. This phosphorylation is inhibited by heparin. Post-translationally, trophic-factor deprivation triggers the cleavage of surface APP by beta-secretase to release sAPP-beta which is further cleaved to release an N-terminal fragment of APP (N-APP). Amyloid-beta peptides are degraded by IDE. In terms of processing, sulfated on tyrosine residues.

It is found in the cell membrane. It localises to the membrane. The protein resides in the perikaryon. Its subcellular location is the cell projection. The protein localises to the growth cone. It is found in the clathrin-coated pit. It localises to the early endosome. The protein resides in the cytoplasmic vesicle. Its subcellular location is the endoplasmic reticulum. The protein localises to the golgi apparatus. It is found in the secreted. It localises to the cell surface. The protein resides in the nucleus. Its subcellular location is the cytoplasm. Its function is as follows. Functions as a cell surface receptor and performs physiological functions on the surface of neurons relevant to neurite growth, neuronal adhesion and axonogenesis. Interaction between APP molecules on neighboring cells promotes synaptogenesis. Involved in cell mobility and transcription regulation through protein-protein interactions. Can promote transcription activation through binding to APBB1-KAT5 and inhibit Notch signaling through interaction with Numb. Couples to apoptosis-inducing pathways such as those mediated by G(o) and JIP. Inhibits G(o)-alpha ATPase activity. Acts as a kinesin I membrane receptor, mediating the axonal transport of beta-secretase and presenilin 1. By acting as a kinesin I membrane receptor, plays a role in axonal anterograde transport of cargo towards synapses in axons. May be involved in copper homeostasis/oxidative stress through copper ion reduction. In vitro, copper-metallated APP induces neuronal death directly or is potentiated through Cu(2+)-mediated low-density lipoprotein oxidation. Can regulate neurite outgrowth through binding to components of the extracellular matrix such as heparin and collagen I and IV. Induces a AGER-dependent pathway that involves activation of p38 MAPK, resulting in internalization of amyloid-beta peptide and mitochondrial dysfunction in cultured cortical neurons. Provides Cu(2+) ions for GPC1 which are required for release of nitric oxide (NO) and subsequent degradation of the heparan sulfate chains on GPC1. In terms of biological role, amyloid-beta peptides are lipophilic metal chelators with metal-reducing activity. Binds transient metals such as copper, zinc and iron. The gamma-CTF peptides as well as the caspase-cleaved peptides, including C31, are potent enhancers of neuronal apoptosis. The polypeptide is Amyloid-beta precursor protein (Saimiri sciureus (Common squirrel monkey)).